Consider the following 319-residue polypeptide: MMVLKVEELVTGKKKGNGDAGEFLPEDFRDGEYEAAVTLEKQEDLKTLPVHFVSLGEQQWKTEKQREAELKKKKLEQRSKLENLEDLEIIIQLKKRKKYKKTKVPVVKEPEPEIVTEPVDVPMFLKAALENKLPVIEKFLSDKNNPDVCDEYKRTALHRACLEGHLAIVEKLIEAGAQIEFRDMLESTAIHWASRGGSLDVLKLLLNKGAKISARDKLLSTPLHVAVRTGHYECAEHLIACEADLNAKDREGDTPLHDAVRLNRYKMIRLLITYGADLNVKNCAGKTPMDLVLHWQNGTKAIFDSLKENSYKASRIAAF.

Residues 61–89 (KTEKQREAELKKKKLEQRSKLENLEDLEI) adopt a coiled-coil conformation. 5 ANK repeats span residues 152–181 (YKRTALHRACLEGHLAIVEKLIEAGAQIEF), 185–214 (LESTAIHWASRGGSLDVLKLLLNKGAKISA), 218–247 (LLSTPLHVAVRTGHYECAEHLIACEADLNA), 251–280 (EGDTPLHDAVRLNRYKMIRLLITYGADLNV), and 284–315 (AGKTPMDLVLHWQNGTKAIFDSLKENSYKASR).

Interacts with TTN/titin and YBX1.

The protein resides in the nucleus. Functionally, may play an important role in endothelial cell activation. May act as a nuclear transcription factor that negatively regulates the expression of cardiac genes. This is Ankyrin repeat domain-containing protein 1 (ANKRD1) from Bos taurus (Bovine).